Reading from the N-terminus, the 334-residue chain is Leucine-rich repeat-containing protein 39 (334 aa).

The stretch at 10–47 (AVNAVKEVWEKRIKKLNEDLKREKEFQQKLVRIWEERV) forms a coiled coil. LRR repeat units follow at residues 84-105 (QLQE…IGRF), 107-128 (NLIV…IGLL), 130-151 (RLQE…LSYC), 153-176 (SLEK…SNLL), 177-198 (KLTH…VLNM), 200-221 (ALEW…IERM), 223-244 (NLHT…ISSM), 246-267 (NLST…MEKM), and 269-290 (NLRF…PPSE).

As to quaternary structure, interacts with MYH7 (via C-terminus).

The protein resides in the cytoplasm. It localises to the myofibril. The protein localises to the sarcomere. It is found in the m line. Functionally, component of the sarcomeric M-band which plays a role in myocyte response to biomechanical stress. May regulate expression of other M-band proteins via an SRF-dependent pathway. Important for normal contractile function in heart. This chain is Leucine-rich repeat-containing protein 39, found in Bos taurus (Bovine).